The sequence spans 1188 residues: MAGHEVRYGKHRTRRSFSRINEVLDLPNLIEIQTDSFQDFLDTGLREVFEDVLPISNFTDTMELEFVGYEFKEPKYTLEEARIHDASYSAPIFVTFRLVNKETGEIKTQEVFFGDFPIMTEMGTFIINGGERIIVSQLVRSPGVYFNDKVDKNGKVGYGSTVIPNRGAWLELETDAKDIAYTRIDRTRKIPFTTLVRALGFSGDDEILDIFGDSELVRNTIEKDIHKNPSDSRTDEALKEIYERLRPGEPKTADSSRSLLIARFFDARRYDLAAVGRYKINKKLNVKTRLLNQIIAENLVDSETGEILVEAGTEMTRDVIESIEAHIDGDLNKFVYTPNDYAVVTEPVVLQKFKVQSPLDPDKVVTIVGNATPDDKVRALTPADILAEMSYFLNLSEGIGKVDDIDHLGNRRIRAVGELLANQFRIGLARMERNVRERMSVQDNDVLTPQQIINIRPVTAAVKEFFGSSQLSQFMDQHNPLSELSHKRRLSALGPGGLTRDRAGYEVRDVHYTHYGRMCPIETPEGPNIGLINNLSSFGHLNKYGFIQTPYRKVDRATGVVTNEIVWLTADEEDEFTVAQANSKLNEDGTFAEEIVMGRHQGNNQEFAASTVDFVDVSPKQVVAVATACIPFLENDDSNRALMGANMQRQAVPLIDPKAPFVGTGMEYQAAHDSGAAVIAQHDGKVVFSDAEKVEVRREDGSLDVYHVTKFRRSNSGTAYNQRTLVKVGDIVEKGDFIADGPSMEKGEMALGQNPVVAYMTWEGYNFEDAVIMSERLVKEDVYTSVHLEEFESETRDTKLGPEEITREVPNVGEEALRDLDEMGIIRIGAEVKEGDILVGKVTPKGEKDLSAEERLLHAIFGDKSREVRDTSLRVPHGGDGIVRDVKIFTRANGDELQSGVNMLVRVYIAQKRKIKVGDKMAGRHGNKGVVSRIVPVEDMPYLPDGTPVDIMLNPLGVPSRMNIGQVMELHLGMAARNLGIHIATPVFDGATAEDLWDTVAEAGMDSDAKTILYDGRTGEPFDNRVSVGVMYMIKLHHMVDDKLHARSVGPYSLVTQQPLGGKAQFGGQRFGEMEVWALEAYGASNVLQEILTYKSDDVTGRLKAYEAITKGKPIPKPGVPESFRVLVKELQSLGLDMRVLDEDDNEVELRDLDEGEDDDVMHVDDLEKAREKQAQETPEVSENSEEK.

A disordered region spans residues 1149-1188 (ELRDLDEGEDDDVMHVDDLEKAREKQAQETPEVSENSEEK). Residues 1161 to 1175 (VMHVDDLEKAREKQA) are compositionally biased toward basic and acidic residues.

This sequence belongs to the RNA polymerase beta chain family. In terms of assembly, the RNAP catalytic core consists of 2 alpha, 1 beta, 1 beta' and 1 omega subunit. When a sigma factor is associated with the core the holoenzyme is formed, which can initiate transcription.

It catalyses the reaction RNA(n) + a ribonucleoside 5'-triphosphate = RNA(n+1) + diphosphate. DNA-dependent RNA polymerase catalyzes the transcription of DNA into RNA using the four ribonucleoside triphosphates as substrates. In Streptococcus uberis (strain ATCC BAA-854 / 0140J), this protein is DNA-directed RNA polymerase subunit beta.